Here is a 154-residue protein sequence, read N- to C-terminus: Superoxide dismutase [Cu-Zn] (154 aa).

Residues His47, His49, and His64 each contribute to the Cu cation site. Cys58 and Cys147 are joined by a disulfide. The tract at residues Gly62–Lys89 is disordered. His64, His72, His81, and Asp84 together coordinate Zn(2+). Position 121 (His121) interacts with Cu cation. Substrate is bound at residue Arg144.

It belongs to the Cu-Zn superoxide dismutase family. In terms of assembly, homodimer. Cu cation serves as cofactor. It depends on Zn(2+) as a cofactor.

Its subcellular location is the cytoplasm. It carries out the reaction 2 superoxide + 2 H(+) = H2O2 + O2. Functionally, destroys radicals which are normally produced within the cells and which are toxic to biological systems. The chain is Superoxide dismutase [Cu-Zn] (SOD1) from Yarrowia lipolytica (strain CLIB 122 / E 150) (Yeast).